Here is a 244-residue protein sequence, read N- to C-terminus: Putative outer membrane protein RC0105 (244 aa).

Residues 1-23 (MLRIVKKLGIILFVSTISINSFA) form the signal peptide.

The protein belongs to the OmpW/AlkL family.

It localises to the cell outer membrane. In Rickettsia conorii (strain ATCC VR-613 / Malish 7), this protein is Putative outer membrane protein RC0105.